A 104-amino-acid polypeptide reads, in one-letter code: Large ribosomal subunit protein uL24 (104 aa).

It belongs to the universal ribosomal protein uL24 family. As to quaternary structure, part of the 50S ribosomal subunit.

Functionally, one of two assembly initiator proteins, it binds directly to the 5'-end of the 23S rRNA, where it nucleates assembly of the 50S subunit. In terms of biological role, one of the proteins that surrounds the polypeptide exit tunnel on the outside of the subunit. The protein is Large ribosomal subunit protein uL24 of Salmonella paratyphi A (strain ATCC 9150 / SARB42).